We begin with the raw amino-acid sequence, 77 residues long: MIYKVFYQETKERSPRRETTRTLYLDIDASSELEGRITARQLVEENRPEYNIEYIELLSDKLLDYEKETGAFEITEF.

Belongs to the RNA polymerase subunit epsilon family. As to quaternary structure, RNAP is composed of a core of 2 alpha, a beta and a beta' subunit. The core is associated with a delta subunit, and at least one of epsilon or omega. When a sigma factor is associated with the core the holoenzyme is formed, which can initiate transcription.

It catalyses the reaction RNA(n) + a ribonucleoside 5'-triphosphate = RNA(n+1) + diphosphate. Its function is as follows. A non-essential component of RNA polymerase (RNAP). The polypeptide is DNA-directed RNA polymerase subunit epsilon (Streptococcus pneumoniae serotype 2 (strain D39 / NCTC 7466)).